The following is a 293-amino-acid chain: Protease HtpX (293 aa).

2 helical membrane-spanning segments follow: residues 4–24 (IALFLLTNLGVMVVFGLILSL) and 32–52 (VMGLMIMAGLFGFGGAFVSLL). His139 contributes to the Zn(2+) binding site. The active site involves Glu140. Residue His143 participates in Zn(2+) binding. 2 helical membrane passes run 158-178 (IVNTFVIFISRILAQLAAGFM) and 193-213 (MVYFVVSMVLELVFGIVASTI). Glu222 contributes to the Zn(2+) binding site.

This sequence belongs to the peptidase M48B family. Zn(2+) is required as a cofactor.

It localises to the cell inner membrane. The sequence is that of Protease HtpX from Erwinia tasmaniensis (strain DSM 17950 / CFBP 7177 / CIP 109463 / NCPPB 4357 / Et1/99).